The primary structure comprises 446 residues: Exodeoxyribonuclease 7 large subunit (446 aa).

The protein belongs to the XseA family. In terms of assembly, heterooligomer composed of large and small subunits.

The protein localises to the cytoplasm. The enzyme catalyses Exonucleolytic cleavage in either 5'- to 3'- or 3'- to 5'-direction to yield nucleoside 5'-phosphates.. In terms of biological role, bidirectionally degrades single-stranded DNA into large acid-insoluble oligonucleotides, which are then degraded further into small acid-soluble oligonucleotides. The polypeptide is Exodeoxyribonuclease 7 large subunit (Geotalea uraniireducens (strain Rf4) (Geobacter uraniireducens)).